Consider the following 210-residue polypeptide: Orotate phosphoribosyltransferase (210 aa).

5-phospho-alpha-D-ribose 1-diphosphate-binding positions include R94, K98, H100, and E120–S128. S124 contributes to the orotate binding site.

Belongs to the purine/pyrimidine phosphoribosyltransferase family. PyrE subfamily. Homodimer. The cofactor is Mg(2+).

It catalyses the reaction orotidine 5'-phosphate + diphosphate = orotate + 5-phospho-alpha-D-ribose 1-diphosphate. The protein operates within pyrimidine metabolism; UMP biosynthesis via de novo pathway; UMP from orotate: step 1/2. Its function is as follows. Catalyzes the transfer of a ribosyl phosphate group from 5-phosphoribose 1-diphosphate to orotate, leading to the formation of orotidine monophosphate (OMP). In Bacillus cytotoxicus (strain DSM 22905 / CIP 110041 / 391-98 / NVH 391-98), this protein is Orotate phosphoribosyltransferase.